The primary structure comprises 357 residues: Alternative oxidase, mitochondrial (357 aa).

A helical membrane pass occupies residues 152–172; it reads LTRCIFLESIAGVPGAVASFI. The Fe cation site is built by E159, E198, and H201. The helical transmembrane segment at 218 to 238 threads the bilayer; sequence IIYVGQGVFCNLFFLFYLANP. Residues E249, E304, and H307 each coordinate Fe cation. The disordered stretch occupies residues 330–357; the sequence is IPDLKEPQPESGLKVTKPHGWEKEELKL. Residues 348 to 357 are compositionally biased toward basic and acidic residues; sequence HGWEKEELKL.

This sequence belongs to the alternative oxidase family. It depends on Fe cation as a cofactor.

Its subcellular location is the mitochondrion inner membrane. Catalyzes cyanide-resistant oxygen consumption. May increase respiration when the cytochrome respiratory pathway is restricted, or in response to low temperatures. In Scheffersomyces stipitis (strain ATCC 58785 / CBS 6054 / NBRC 10063 / NRRL Y-11545) (Yeast), this protein is Alternative oxidase, mitochondrial (STO1).